The following is a 209-amino-acid chain: Max dimerization protein 4 (209 aa).

The interval 6–23 (LLLLLEAAEYLERRDREA) is interaction with SIN3A and SIN3B. The bHLH domain maps to 53-105 (NNRSSHNELEKHRRAKLRLYLEQLKQLGPLGPDSTRHTTLSLLKRAKMHIKKL). Residues 137–209 (SVERVRTDST…CRRPGCPGLS (73 aa)) are disordered. Acidic residues predominate over residues 153–163 (DDSEQEVDIEG). Residues 185–195 (SLQSSGCSDSS) are compositionally biased toward polar residues.

In terms of assembly, efficient DNA binding requires dimerization with another bHLH protein. Binds DNA as a heterodimer with MAX. Interacts with SIN3A AND SIN3B. Interacts with RNF17.

It localises to the nucleus. Its function is as follows. Transcriptional repressor. Binds with MAX to form a sequence-specific DNA-binding protein complex which recognizes the core sequence 5'-CAC[GA]TG-3'. Antagonizes MYC transcriptional activity by competing for MAX and suppresses MYC dependent cell transformation. The protein is Max dimerization protein 4 (Mxd4) of Mus musculus (Mouse).